Here is a 165-residue protein sequence, read N- to C-terminus: Lipoprotein signal peptidase (165 aa).

A run of 2 helical transmembrane segments spans residues 66-86 and 91-111; these read WQFW…LSLT and NEPV…GNLV. Catalysis depends on residues aspartate 121 and aspartate 139. A helical transmembrane segment spans residues 132 to 152; the sequence is WPAFNVADIAICIGAFLAFVA.

It belongs to the peptidase A8 family.

It is found in the cell inner membrane. It catalyses the reaction Release of signal peptides from bacterial membrane prolipoproteins. Hydrolyzes -Xaa-Yaa-Zaa-|-(S,diacylglyceryl)Cys-, in which Xaa is hydrophobic (preferably Leu), and Yaa (Ala or Ser) and Zaa (Gly or Ala) have small, neutral side chains.. The protein operates within protein modification; lipoprotein biosynthesis (signal peptide cleavage). Functionally, this protein specifically catalyzes the removal of signal peptides from prolipoproteins. The chain is Lipoprotein signal peptidase from Nitratidesulfovibrio vulgaris (strain DP4) (Desulfovibrio vulgaris).